Here is a 651-residue protein sequence, read N- to C-terminus: Macrolide export ATP-binding/permease protein MacB (651 aa).

The 238-residue stretch at Ile2–Ala239 folds into the ABC transporter domain. An ATP-binding site is contributed by Gly38–Ser45. 4 consecutive transmembrane segments (helical) span residues Phe269–Gly289, Ile532–Val552, Ile589–Ala609, and Met614–Trp634.

This sequence belongs to the ABC transporter superfamily. Macrolide exporter (TC 3.A.1.122) family. As to quaternary structure, homodimer.

It localises to the cell inner membrane. Its function is as follows. Non-canonical ABC transporter that contains transmembrane domains (TMD), which form a pore in the inner membrane, and an ATP-binding domain (NBD), which is responsible for energy generation. Confers resistance against macrolides. The polypeptide is Macrolide export ATP-binding/permease protein MacB (Chlorobaculum tepidum (strain ATCC 49652 / DSM 12025 / NBRC 103806 / TLS) (Chlorobium tepidum)).